The primary structure comprises 182 residues: Transcription antitermination protein NusB (182 aa).

Residues 159–182 (TPVENSEAEAAGYPVEESIEEDSQ) are disordered.

Belongs to the NusB family.

Its function is as follows. Involved in transcription antitermination. Required for transcription of ribosomal RNA (rRNA) genes. Binds specifically to the boxA antiterminator sequence of the ribosomal RNA (rrn) operons. This is Transcription antitermination protein NusB from Corynebacterium diphtheriae (strain ATCC 700971 / NCTC 13129 / Biotype gravis).